The sequence spans 461 residues: GTPase Der (461 aa).

2 EngA-type G domains span residues 2–166 and 199–370; these read IKVA…PKKP and IKVA…KNYS. Residues 8-15, 57-61, 118-121, 205-212, 252-256, and 316-319 contribute to the GTP site; these read GKPNVGKS, DTGGL, NKID, GRVNVGKS, DTAGI, and NKWD. One can recognise a KH-like domain in the interval 371–455; it reads KRIPTATLNK…PIIFVARKKG (85 aa).

This sequence belongs to the TRAFAC class TrmE-Era-EngA-EngB-Septin-like GTPase superfamily. EngA (Der) GTPase family. As to quaternary structure, associates with the 50S ribosomal subunit.

Functionally, GTPase that plays an essential role in the late steps of ribosome biogenesis. The chain is GTPase Der from Nautilia profundicola (strain ATCC BAA-1463 / DSM 18972 / AmH).